A 296-amino-acid chain; its full sequence is Cytidine deaminase (296 aa).

CMP/dCMP-type deaminase domains lie at 47-167 (AESE…FGPS) and 186-296 (DSSD…LDPE). 88 to 90 (NME) is a binding site for substrate. His101 contacts Zn(2+). The Proton donor role is filled by Glu103. Cys128 and Cys131 together coordinate Zn(2+).

It belongs to the cytidine and deoxycytidylate deaminase family. As to quaternary structure, homodimer. Zn(2+) serves as cofactor.

It catalyses the reaction cytidine + H2O + H(+) = uridine + NH4(+). It carries out the reaction 2'-deoxycytidine + H2O + H(+) = 2'-deoxyuridine + NH4(+). Its function is as follows. This enzyme scavenges exogenous and endogenous cytidine and 2'-deoxycytidine for UMP synthesis. This Shewanella sediminis (strain HAW-EB3) protein is Cytidine deaminase.